Reading from the N-terminus, the 69-residue chain is Nodulin-3 (69 aa).

An N-terminal signal peptide occupies residues Met-1–Ala-24.

The protein is Nodulin-3 (ENOD3) of Pisum sativum (Garden pea).